The sequence spans 965 residues: Isoleucine--tRNA ligase (965 aa).

The 'HIGH' region motif lies at 68-78; sequence PYANGSLHMGH. L-isoleucyl-5'-AMP is bound at residue E582. Positions 623 to 627 match the 'KMSKS' region motif; sequence KMSKS. K626 is an ATP binding site. Zn(2+) is bound by residues C936, C939, C956, and C959.

It belongs to the class-I aminoacyl-tRNA synthetase family. IleS type 1 subfamily. Monomer. The cofactor is Zn(2+).

Its subcellular location is the cytoplasm. It carries out the reaction tRNA(Ile) + L-isoleucine + ATP = L-isoleucyl-tRNA(Ile) + AMP + diphosphate. In terms of biological role, catalyzes the attachment of isoleucine to tRNA(Ile). As IleRS can inadvertently accommodate and process structurally similar amino acids such as valine, to avoid such errors it has two additional distinct tRNA(Ile)-dependent editing activities. One activity is designated as 'pretransfer' editing and involves the hydrolysis of activated Val-AMP. The other activity is designated 'posttransfer' editing and involves deacylation of mischarged Val-tRNA(Ile). This is Isoleucine--tRNA ligase from Prochlorococcus marinus (strain MIT 9515).